A 387-amino-acid chain; its full sequence is Succinate--CoA ligase [ADP-forming] subunit beta (387 aa).

Residues 9 to 236 (RDLFESYGVP…AAAADPLEAK (228 aa)) form the ATP-grasp domain. Residues Lys45, 52–54 (GRG), Ala94, and Glu99 each bind ATP. Positions 191 and 205 each coordinate Mg(2+). Substrate-binding positions include Asn256 and 318–320 (GIT).

This sequence belongs to the succinate/malate CoA ligase beta subunit family. As to quaternary structure, heterotetramer of two alpha and two beta subunits. It depends on Mg(2+) as a cofactor.

The catalysed reaction is succinate + ATP + CoA = succinyl-CoA + ADP + phosphate. It carries out the reaction GTP + succinate + CoA = succinyl-CoA + GDP + phosphate. The protein operates within carbohydrate metabolism; tricarboxylic acid cycle; succinate from succinyl-CoA (ligase route): step 1/1. In terms of biological role, succinyl-CoA synthetase functions in the citric acid cycle (TCA), coupling the hydrolysis of succinyl-CoA to the synthesis of either ATP or GTP and thus represents the only step of substrate-level phosphorylation in the TCA. The beta subunit provides nucleotide specificity of the enzyme and binds the substrate succinate, while the binding sites for coenzyme A and phosphate are found in the alpha subunit. This is Succinate--CoA ligase [ADP-forming] subunit beta from Clavibacter michiganensis subsp. michiganensis (strain NCPPB 382).